The following is a 308-amino-acid chain: Homoserine kinase (308 aa).

Residue 94 to 104 (PLARGLGSSAT) participates in ATP binding.

This sequence belongs to the GHMP kinase family. Homoserine kinase subfamily.

The protein localises to the cytoplasm. It carries out the reaction L-homoserine + ATP = O-phospho-L-homoserine + ADP + H(+). It participates in amino-acid biosynthesis; L-threonine biosynthesis; L-threonine from L-aspartate: step 4/5. Functionally, catalyzes the ATP-dependent phosphorylation of L-homoserine to L-homoserine phosphate. This is Homoserine kinase from Crocosphaera subtropica (strain ATCC 51142 / BH68) (Cyanothece sp. (strain ATCC 51142)).